Here is a 509-residue protein sequence, read N- to C-terminus: Maturase K (509 aa).

The protein belongs to the intron maturase 2 family. MatK subfamily.

The protein resides in the plastid. The protein localises to the chloroplast. Functionally, usually encoded in the trnK tRNA gene intron. Probably assists in splicing its own and other chloroplast group II introns. This is Maturase K from Clematis ligusticifolia (Western white clematis).